The following is a 121-amino-acid chain: Protein SNORC (121 aa).

Positions 1–24 are cleaved as a signal peptide; that stretch reads MASCLALRMALLLVSGVLAPAVLT. At 25-92 the chain is on the extracellular side; that stretch reads DDVPQEPVPT…QGGGSLGPGA (68 aa). Positions 28–84 are disordered; the sequence is PQEPVPTLWNEPAELPSGEGPVESTSPGREPVDTGPPAPTVAPGPEDSTAQERLDQG. Residues 93–113 traverse the membrane as a helical segment; sequence IAAIVIAALLATCVVLALVVV. Topologically, residues 114 to 121 are cytoplasmic; the sequence is ALRKFSAS.

As to quaternary structure, interacts (via the extracellular domain) with FGF2. Expressed in cartilage.

The protein localises to the membrane. It localises to the cytoplasm. Its subcellular location is the secreted. The protein resides in the extracellular space. It is found in the extracellular matrix. Functionally, plays a role in the regulation of chondrocyte maturation and postnatal endochondral ossification. May inhibit cell growth stimulation induced by FGF2. This chain is Protein SNORC, found in Homo sapiens (Human).